We begin with the raw amino-acid sequence, 309 residues long: Probable non-structural 36.3 kDa protein (309 aa).

The protein is Probable non-structural 36.3 kDa protein (S6) of Avena sativa (Oat).